We begin with the raw amino-acid sequence, 243 residues long: Pyridoxine 5'-phosphate synthase (243 aa).

N7 contacts 3-amino-2-oxopropyl phosphate. A 1-deoxy-D-xylulose 5-phosphate-binding site is contributed by 9-10; the sequence is DH. R18 contributes to the 3-amino-2-oxopropyl phosphate binding site. H43 (proton acceptor) is an active-site residue. R45 and H50 together coordinate 1-deoxy-D-xylulose 5-phosphate. Catalysis depends on E70, which acts as the Proton acceptor. T100 contributes to the 1-deoxy-D-xylulose 5-phosphate binding site. H192 serves as the catalytic Proton donor. 3-amino-2-oxopropyl phosphate is bound by residues G193 and 215 to 216; that span reads GF.

Belongs to the PNP synthase family. As to quaternary structure, homooctamer; tetramer of dimers.

It localises to the cytoplasm. It catalyses the reaction 3-amino-2-oxopropyl phosphate + 1-deoxy-D-xylulose 5-phosphate = pyridoxine 5'-phosphate + phosphate + 2 H2O + H(+). It functions in the pathway cofactor biosynthesis; pyridoxine 5'-phosphate biosynthesis; pyridoxine 5'-phosphate from D-erythrose 4-phosphate: step 5/5. Its function is as follows. Catalyzes the complicated ring closure reaction between the two acyclic compounds 1-deoxy-D-xylulose-5-phosphate (DXP) and 3-amino-2-oxopropyl phosphate (1-amino-acetone-3-phosphate or AAP) to form pyridoxine 5'-phosphate (PNP) and inorganic phosphate. This is Pyridoxine 5'-phosphate synthase from Salinibacter ruber (strain DSM 13855 / M31).